A 218-amino-acid chain; its full sequence is ATP phosphoribosyltransferase (218 aa).

This sequence belongs to the ATP phosphoribosyltransferase family. Short subfamily. Heteromultimer composed of HisG and HisZ subunits.

The protein localises to the cytoplasm. It carries out the reaction 1-(5-phospho-beta-D-ribosyl)-ATP + diphosphate = 5-phospho-alpha-D-ribose 1-diphosphate + ATP. It participates in amino-acid biosynthesis; L-histidine biosynthesis; L-histidine from 5-phospho-alpha-D-ribose 1-diphosphate: step 1/9. In terms of biological role, catalyzes the condensation of ATP and 5-phosphoribose 1-diphosphate to form N'-(5'-phosphoribosyl)-ATP (PR-ATP). Has a crucial role in the pathway because the rate of histidine biosynthesis seems to be controlled primarily by regulation of HisG enzymatic activity. The chain is ATP phosphoribosyltransferase (hisG) from Deinococcus radiodurans (strain ATCC 13939 / DSM 20539 / JCM 16871 / CCUG 27074 / LMG 4051 / NBRC 15346 / NCIMB 9279 / VKM B-1422 / R1).